We begin with the raw amino-acid sequence, 101 residues long: MAPKYELDQLVNSICKSTRDTDASKILKEIEDNNSYITEVQLKRLLKLHDGSFRESLTPLQKLHDKYNEIVMRQGDLQSWAELIDRDLRVLELTMQLAKRR.

Belongs to the BLOC1S1 family. As to quaternary structure, component of the biogenesis of lysosome-related organelles complex-1 (BLOC-1).

Its subcellular location is the endosome. Component of the biogenesis of lysosome-related organelles complex-1 (BLOC-1), a complex involved in endosomal cargo sorting. The chain is Biogenesis of lysosome-related organelles complex 1 subunit BLS1 (BLS1) from Zygosaccharomyces rouxii (strain ATCC 2623 / CBS 732 / NBRC 1130 / NCYC 568 / NRRL Y-229).